The primary structure comprises 520 residues: Bifunctional purine biosynthesis protein PurH (520 aa).

Residues methionine 1–valine 150 form the MGS-like domain.

It belongs to the PurH family.

It carries out the reaction (6R)-10-formyltetrahydrofolate + 5-amino-1-(5-phospho-beta-D-ribosyl)imidazole-4-carboxamide = 5-formamido-1-(5-phospho-D-ribosyl)imidazole-4-carboxamide + (6S)-5,6,7,8-tetrahydrofolate. The enzyme catalyses IMP + H2O = 5-formamido-1-(5-phospho-D-ribosyl)imidazole-4-carboxamide. It functions in the pathway purine metabolism; IMP biosynthesis via de novo pathway; 5-formamido-1-(5-phospho-D-ribosyl)imidazole-4-carboxamide from 5-amino-1-(5-phospho-D-ribosyl)imidazole-4-carboxamide (10-formyl THF route): step 1/1. It participates in purine metabolism; IMP biosynthesis via de novo pathway; IMP from 5-formamido-1-(5-phospho-D-ribosyl)imidazole-4-carboxamide: step 1/1. This chain is Bifunctional purine biosynthesis protein PurH, found in Corynebacterium glutamicum (strain ATCC 13032 / DSM 20300 / JCM 1318 / BCRC 11384 / CCUG 27702 / LMG 3730 / NBRC 12168 / NCIMB 10025 / NRRL B-2784 / 534).